The following is a 196-amino-acid chain: UMP-CMP kinase (196 aa).

13–18 (GAGKGT) serves as a coordination point for ATP. An NMP region spans residues 33–63 (SAGDLLRDERKRPGSQYGELIENYIKEGEIV). A ribonucleoside 5'-phosphate is bound by residues R39, 61–63 (EIV), and 93–96 (GFPR). N100 contributes to the CMP binding site. The tract at residues 133 to 143 (ERGKSSGRSDD) is LID. R134 lines the ATP pocket. Residues R140 and R151 each contribute to the a ribonucleoside 5'-phosphate site. K179 serves as a coordination point for ATP.

Belongs to the adenylate kinase family. UMP-CMP kinase subfamily. As to quaternary structure, monomer. The cofactor is Mg(2+).

It is found in the nucleus. It localises to the cytoplasm. The catalysed reaction is CMP + ATP = CDP + ADP. It carries out the reaction dCMP + ATP = dCDP + ADP. The enzyme catalyses UMP + ATP = UDP + ADP. It catalyses the reaction a 2'-deoxyribonucleoside 5'-diphosphate + ATP = a 2'-deoxyribonucleoside 5'-triphosphate + ADP. The catalysed reaction is a ribonucleoside 5'-diphosphate + ATP = a ribonucleoside 5'-triphosphate + ADP. Its function is as follows. Catalyzes the phosphorylation of pyrimidine nucleoside monophosphates at the expense of ATP. Plays an important role in de novo pyrimidine nucleotide biosynthesis. Has preference for UMP and CMP as phosphate acceptors. Also displays broad nucleoside diphosphate kinase activity. This chain is UMP-CMP kinase (CMPK), found in Gallus gallus (Chicken).